Consider the following 360-residue polypeptide: Peptide chain release factor 1 (360 aa).

An N5-methylglutamine modification is found at Gln-235.

The protein belongs to the prokaryotic/mitochondrial release factor family. Post-translationally, methylated by PrmC. Methylation increases the termination efficiency of RF1.

Its subcellular location is the cytoplasm. Its function is as follows. Peptide chain release factor 1 directs the termination of translation in response to the peptide chain termination codons UAG and UAA. The polypeptide is Peptide chain release factor 1 (Bordetella pertussis (strain Tohama I / ATCC BAA-589 / NCTC 13251)).